A 165-amino-acid polypeptide reads, in one-letter code: Small ribosomal subunit protein bS16 (165 aa).

The protein belongs to the bacterial ribosomal protein bS16 family.

This Azobacteroides pseudotrichonymphae genomovar. CFP2 protein is Small ribosomal subunit protein bS16.